Consider the following 444-residue polypeptide: C4-dicarboxylate transport protein (444 aa).

9 helical membrane-spanning segments follow: residues 17–37, 57–77, 92–112, 139–159, 161–181, 201–221, 234–254, 320–340, and 368–388; these read PFYT…ILLG, LVKM…IAGM, LYFL…ANVV, EQSI…GAFA, GDIL…AMVG, LVAI…AFTI, MLIG…LGAV, IYMT…LSWG, and AATL…ILGI.

It belongs to the dicarboxylate/amino acid:cation symporter (DAACS) (TC 2.A.23) family.

It is found in the cell inner membrane. Responsible for the transport of dicarboxylates such as succinate, fumarate, and malate from the periplasm across the membrane. This Rhizobium johnstonii (strain DSM 114642 / LMG 32736 / 3841) (Rhizobium leguminosarum bv. viciae) protein is C4-dicarboxylate transport protein.